We begin with the raw amino-acid sequence, 342 residues long: Platelet-activating factor receptor (342 aa).

The Extracellular portion of the chain corresponds to 1 to 16; that stretch reads MEPNNSFRVDSEFRYT. Residue asparagine 4 is glycosylated (N-linked (GlcNAc...) asparagine). A helical transmembrane segment spans residues 17–38; sequence LFPIFYSIVFVLGVIANSYVLW. The Cytoplasmic segment spans residues 39-54; it reads VFARLYPSKKFNEIKI. The chain crosses the membrane as a helical span at residues 55-74; sequence FMVNLTMADLLFLVTLPLWI. At 75–91 the chain is on the extracellular side; sequence VYYYNQGDWILPKFLCN. A disulfide bridge connects residues cysteine 90 and cysteine 173. The helical transmembrane segment at 92–113 threads the bilayer; the sequence is LAGCFFFINTYCSVAFLAVITY. Residues 114-133 are Cytoplasmic-facing; the sequence is NRFQAVTRPIKTAQATTRKR. A helical transmembrane segment spans residues 134–155; the sequence is GILLSLIIWVSIVGAASYFFVL. Residues 156–184 lie on the Extracellular side of the membrane; it reads DSTNREPNKTGSANITRCFEHYEKGSIPV. Residues asparagine 163 and asparagine 169 are each glycosylated (N-linked (GlcNAc...) asparagine). The chain crosses the membrane as a helical span at residues 185–205; it reads LTIHIFLVFSFFLVFLIILFC. Over 206–233 the chain is Cytoplasmic; sequence NLVIIRTLLTQQVQIQRNAEVKRRALWM. The chain crosses the membrane as a helical span at residues 234 to 254; sequence VCTVLAVFIICFVPHHLVQLP. Over 255–276 the chain is Extracellular; the sequence is WTLAELGFQDTDFHQAINDAHQ. The helical transmembrane segment at 277–296 threads the bilayer; the sequence is VTLCLLSTNCVLDPIIYCFL. Residues 297-342 are Cytoplasmic-facing; it reads TKKFRKHLTEKLYSMRESRKCSRATSETGTEVVMQLKDVPVKSLKY.

Belongs to the G-protein coupled receptor 1 family. In terms of assembly, interacts with ARRB1. In terms of tissue distribution, found in oviductal epithelial and stroma cells. Levels in the oviduct are raised at days 2-4 of both pregnancy and of the estrus cycle. In the endometrium, localization is predominantly to the apical borders of glandular and luminal epithelial cells. Expressed at lower levels in endometrial stromal cells. Levels in the endometrium are increased at day 20 of pregnancy (at protein level).

The protein localises to the cell membrane. Receptor for platelet activating factor, a chemotactic phospholipid mediator that possesses potent inflammatory, smooth-muscle contractile and hypotensive activity. Seems to mediate its action via a G protein that activates a phosphatidylinositol-calcium second messenger system. May be involved in the morphological and physical modifications of the oviduct and uterus during the estrus cycle and early pregnancy. The protein is Platelet-activating factor receptor of Bos taurus (Bovine).